The sequence spans 312 residues: E3 ubiquitin-protein ligase RNF126-B (312 aa).

The Zn(2+) site is built by cysteine 13, cysteine 16, cysteine 29, and cysteine 32. The C4-type zinc-finger motif lies at 13–32 (CHSCTAEITPRLPEYTCPRC). 2 disordered regions span residues 41–63 (PETS…NRPS) and 96–139 (GTSG…RNEG). Residues 44-55 (SRNSESNSSNNS) show a composition bias toward low complexity. Residues 102 to 115 (EETRDGESRREHQS) show a composition bias toward basic and acidic residues. A compositionally biased stretch (basic residues) spans 124–134 (PRARMSTRRGA). The RING-type zinc-finger motif lies at 228 to 269 (CPVCKEDYTVGESVRQLPCNHLFHNDCIIPWLEQHDTCPVCR). A disordered region spans residues 275-312 (QNTATNPPGLTDMTFSSSSTSSSSSTSPTDENNTANNS). Over residues 290–301 (SSSSTSSSSSTS) the composition is skewed to low complexity. Residues 302–312 (PTDENNTANNS) are compositionally biased toward polar residues.

The protein resides in the cytoplasm. Its subcellular location is the nucleus. It catalyses the reaction S-ubiquitinyl-[E2 ubiquitin-conjugating enzyme]-L-cysteine + [acceptor protein]-L-lysine = [E2 ubiquitin-conjugating enzyme]-L-cysteine + N(6)-ubiquitinyl-[acceptor protein]-L-lysine.. It functions in the pathway protein modification; protein ubiquitination. Its function is as follows. E3 ubiquitin-protein ligase that mediates ubiquitination oF target proteins. Depending on the associated E2 ligase, mediates 'Lys-27'-, 'Lys-29'-, 'Lys-48'- and/or 'Lys-63'-linked polyubiquitination of substrates. Part of a BAG6-dependent quality control process ensuring that proteins of the secretory pathway that are mislocalized to the cytosol are degraded by the proteasome. Probably acts by providing the ubiquitin ligase activity associated with the BAG6 complex and be responsible for ubiquitination of the hydrophobic mislocalized proteins and their targeting to the proteasome. This chain is E3 ubiquitin-protein ligase RNF126-B, found in Xenopus laevis (African clawed frog).